The sequence spans 39 residues: Osmotin-like protein (39 aa).

Belongs to the thaumatin family. In terms of processing, contains intrachain disulfide bonds.

In terms of biological role, may be an important antifungal protein. The protein is Osmotin-like protein of Hevea brasiliensis (Para rubber tree).